Reading from the N-terminus, the 472-residue chain is Adenosylhomocysteinase (472 aa).

Residues threonine 64, aspartate 138, and glutamate 198 each coordinate substrate. 199-201 (TTT) is a binding site for NAD(+). Substrate-binding residues include lysine 228 and aspartate 232. NAD(+)-binding positions include asparagine 233, 262-267 (GFGDVG), glutamate 285, asparagine 320, 341-343 (IGH), and asparagine 386.

It belongs to the adenosylhomocysteinase family. The cofactor is NAD(+).

It localises to the cytoplasm. The catalysed reaction is S-adenosyl-L-homocysteine + H2O = L-homocysteine + adenosine. Its pathway is amino-acid biosynthesis; L-homocysteine biosynthesis; L-homocysteine from S-adenosyl-L-homocysteine: step 1/1. Functionally, may play a key role in the regulation of the intracellular concentration of adenosylhomocysteine. In Prochlorococcus marinus (strain MIT 9312), this protein is Adenosylhomocysteinase.